Consider the following 343-residue polypeptide: Thiamine thiazole synthase 4, chloroplastic (343 aa).

Substrate is bound by residues Ala-89, 109–110, Gly-117, and Ala-182; that span reads EQ. Residue Cys-211 is modified to 2,3-didehydroalanine (Cys). Substrate contacts are provided by residues Asp-213, His-228, Met-280, and 290 to 292; that span reads RMG.

Belongs to the THI4 family. Homooctamer. The cofactor is Fe cation. In terms of processing, during the catalytic reaction, a sulfide is transferred from Cys-211 to a reaction intermediate, generating a dehydroalanine residue.

Its subcellular location is the plastid. The protein resides in the chloroplast. The enzyme catalyses [ADP-thiazole synthase]-L-cysteine + glycine + NAD(+) = [ADP-thiazole synthase]-dehydroalanine + ADP-5-ethyl-4-methylthiazole-2-carboxylate + nicotinamide + 3 H2O + 2 H(+). Involved in biosynthesis of the thiamine precursor thiazole. Catalyzes the conversion of NAD and glycine to adenosine diphosphate 5-(2-hydroxyethyl)-4-methylthiazole-2-carboxylic acid (ADT), an adenylated thiazole intermediate. The reaction includes an iron-dependent sulfide transfer from a conserved cysteine residue of the protein to a thiazole intermediate. The enzyme can only undergo a single turnover, which suggests it is a suicide enzyme. May have additional roles in adaptation to various stress conditions and in DNA damage tolerance. The sequence is that of Thiamine thiazole synthase 4, chloroplastic from Physcomitrium patens (Spreading-leaved earth moss).